A 361-amino-acid chain; its full sequence is Replication-associated protein (361 aa).

The tract at residues 1–31 (MSSLPVSESEGEGSGTSVQVPSRGGQVTPGE) is disordered. Residues 35 to 138 (SLRTKHVFLT…PESSWEFGKF (104 aa)) form the CRESS-DNA virus Rep endonuclease domain. The short motif at 42 to 45 (FLTY) is the RCR-1 element. Glu-76, His-84, and His-86 together coordinate a divalent metal cation. The short motif at 84–86 (HLH) is the RCR-2 element. Residue Tyr-124 is the For DNA cleavage activity of the active site. Residues 124–127 (YCMK) carry the RCR-3 motif. The interval 192–204 (SANALFPDPPQTY) is oligomerization. 243–250 (GPTRTGKT) contacts ATP. The tract at residues 266–285 (VNFLEEWNCQAQFNIIDDIP) is transactivation. A Nuclear localization signal motif is present at residues 307 to 317 (KYGKKKRIPNG).

This sequence belongs to the geminiviridae Rep protein family. As to quaternary structure, homooligomer. Rep binds to repeated DNA motifs (iterons). Forms the O-complex, which is a Rep-DNA complex involved in the initiation of RCR. Part of the C- and V-complexes which are RepA-Rep-DNA complexes involved in the c-sense and v-sense transcription. The cofactor is Mg(2+). Mn(2+) is required as a cofactor.

It localises to the host nucleus. Functionally, essential for the replication of viral ssDNA. The closed circular ssDNA genome is first converted to a superhelical dsDNA. Rep binds a specific region at the genome origin of replication. It introduces an endonucleolytic nick within the conserved sequence 5'-TAATATTAC-3' in the intergenic region of the genome present in all geminiviruses, thereby initiating the rolling circle replication (RCR). Following cleavage, binds covalently to the 5'-phosphate of DNA as a tyrosyl ester. The cleavage gives rise to a free 3'-OH that serves as a primer for the cellular DNA polymerase. The polymerase synthesizes the (+) strand DNA by rolling circle mechanism. After one round of replication, a Rep-catalyzed nucleotidyl transfer reaction releases a circular single-stranded virus genome, thereby terminating the replication. Displays origin-specific DNA cleavage, nucleotidyl transferase, ATPase and helicase activities. Acts as an inhibitor of C-sense gene transcription. This Avena sativa (Oat) protein is Replication-associated protein.